Consider the following 466-residue polypeptide: Glutamate decarboxylase (466 aa).

Residue K277 is modified to N6-(pyridoxal phosphate)lysine.

Belongs to the group II decarboxylase family. Requires pyridoxal 5'-phosphate as cofactor.

It carries out the reaction L-glutamate + H(+) = 4-aminobutanoate + CO2. In terms of biological role, converts internalized glutamate to GABA and increases the internal pH. Involved in glutamate-dependent acid resistance. The polypeptide is Glutamate decarboxylase (gadB) (Lactococcus lactis subsp. cremoris (strain MG1363)).